The chain runs to 582 residues: ATP-dependent lipid A-core flippase (582 aa).

A run of 5 helical transmembrane segments spans residues L27–L47, L69–L89, A142–Y162, W165–V185, and A249–L269. Residues I28–R310 enclose the ABC transmembrane type-1 domain. The 237-residue stretch at V342–I578 folds into the ABC transporter domain. G376–S383 provides a ligand contact to ATP.

Belongs to the ABC transporter superfamily. Lipid exporter (TC 3.A.1.106) family. Homodimer.

The protein localises to the cell inner membrane. The catalysed reaction is ATP + H2O + lipid A-core oligosaccharideSide 1 = ADP + phosphate + lipid A-core oligosaccharideSide 2.. Involved in lipopolysaccharide (LPS) biosynthesis. Translocates lipid A-core from the inner to the outer leaflet of the inner membrane. Transmembrane domains (TMD) form a pore in the inner membrane and the ATP-binding domain (NBD) is responsible for energy generation. The protein is ATP-dependent lipid A-core flippase of Vibrio parahaemolyticus serotype O3:K6 (strain RIMD 2210633).